A 355-amino-acid polypeptide reads, in one-letter code: C-C chemokine receptor type 1 (355 aa).

At 1–34 (METPNTTEDYDTTTEFDYGDATPCQKVNERAFGA) the chain is on the extracellular side. The N-linked (GlcNAc...) asparagine glycan is linked to asparagine 5. Disulfide bonds link cysteine 24/cysteine 273 and cysteine 106/cysteine 183. The helical transmembrane segment at 35 to 60 (QLLPPLYSLVFVIGLVGNILVVLVLV) threads the bilayer. Topologically, residues 61–64 (QYKR) are cytoplasmic. The helical transmembrane segment at 65–91 (LKNMTSIYLLNLAISDLLFLFTLPFWI) threads the bilayer. The Extracellular segment spans residues 92–107 (DYKLKDDWVFGDAMCK). A helical membrane pass occupies residues 108 to 129 (ILSGFYYTGLYSEIFFIILLTI). Over 130 to 146 (DRYLAIVHAVFALRART) the chain is Cytoplasmic. A helical membrane pass occupies residues 147–171 (VTFGVITSIIIWALAILASMPGLYF). The Extracellular segment spans residues 172 to 197 (SKTQWEFTHHTCSLHFPHESLREWKL). Residues 198–223 (FQALKLNLFGLVLPLLVMIICYTGII) form a helical membrane-spanning segment. At 224-239 (KILLRRPNEKKSKAVR) the chain is on the cytoplasmic side. The helical transmembrane segment at 240-264 (LIFVIMIIFFLFWTPYNLTILISVF) threads the bilayer. The Extracellular segment spans residues 265 to 281 (QDFLFTHECEQSRHLDL). Residues 282–305 (AVQVTEVIAYTHCCVNPVIYAFVG) form a helical membrane-spanning segment. At 306–355 (ERFRKYLRQLFHRRVAVHLVKWLPFLSVDRLERVSSTSPSTGEHELSAGF) the chain is on the cytoplasmic side.

This sequence belongs to the G-protein coupled receptor 1 family. Interacts with CREB3. Interacts with CCL3. Interacts with CCL15. Interacts with CCL23. Interacts with GNAI1. Interacts with PF4/CXCL4. Widely expressed in different hematopoietic cells.

The protein resides in the cell membrane. Its function is as follows. Chemokine receptor that plays a crucial role in regulating immune cell migration, inflammation, and immune responses. Contributes to the inflammatory response by recruiting immune cells, such as monocytes, macrophages, T-cells, and dendritic cells, to sites of inflammation for the clearance of pathogens and the resolution of tissue damage. When activated by its ligands including CCL3, CCL5-9, CCL13-16 and CCL23, triggers a signaling cascade within immune cells, leading to their migration towards the source of the chemokine. For example, mediates neutrophil migration after activation by CCL3 leading to the sequential release of TNF-alpha and leukotriene B4. Also mediates monocyte migration upon CXCL4 binding. Activation by CCL5 results in neuroinflammation through the ERK1/2 signaling pathway. The polypeptide is C-C chemokine receptor type 1 (CCR1) (Homo sapiens (Human)).